A 63-amino-acid polypeptide reads, in one-letter code: Large ribosomal subunit protein bL28 (63 aa).

This sequence belongs to the bacterial ribosomal protein bL28 family.

This chain is Large ribosomal subunit protein bL28, found in Clostridium botulinum (strain ATCC 19397 / Type A).